The chain runs to 396 residues: Flap endonuclease 1 (396 aa).

Residues 1–104 form an N-domain region; sequence MGIKHLYQLI…GELAKRFQRK (104 aa). Aspartate 34 is a Mg(2+) binding site. Residues arginine 47 and arginine 70 each contribute to the DNA site. 5 residues coordinate Mg(2+): aspartate 86, glutamate 158, glutamate 160, aspartate 179, and aspartate 181. Residues 122 to 255 are I-domain; the sequence is DVEKFSRRTV…STALKLIRDH (134 aa). Glutamate 158 contacts DNA. The DNA site is built by glycine 233 and aspartate 235. Aspartate 235 lines the Mg(2+) pocket. The interval 338 to 396 is disordered; that stretch reads MKSAQQSRLEGFFKPVERTPEEKASLKRKADEKLSEKKKKQKEEAKAKKQAKSKPRTAG. Positions 342-350 are interaction with PCNA; it reads QQSRLEGFF. The segment covering 352-384 has biased composition (basic and acidic residues); it reads PVERTPEEKASLKRKADEKLSEKKKKQKEEAKA. Basic residues predominate over residues 385-396; sequence KKQAKSKPRTAG.

This sequence belongs to the XPG/RAD2 endonuclease family. FEN1 subfamily. Interacts with PCNA. Three molecules of FEN1 bind to one PCNA trimer with each molecule binding to one PCNA monomer. PCNA stimulates the nuclease activity without altering cleavage specificity. It depends on Mg(2+) as a cofactor. Post-translationally, phosphorylated. Phosphorylation upon DNA damage induces relocalization to the nuclear plasma.

The protein localises to the nucleus. It localises to the nucleolus. The protein resides in the nucleoplasm. It is found in the mitochondrion. Structure-specific nuclease with 5'-flap endonuclease and 5'-3' exonuclease activities involved in DNA replication and repair. During DNA replication, cleaves the 5'-overhanging flap structure that is generated by displacement synthesis when DNA polymerase encounters the 5'-end of a downstream Okazaki fragment. It enters the flap from the 5'-end and then tracks to cleave the flap base, leaving a nick for ligation. Also involved in the long patch base excision repair (LP-BER) pathway, by cleaving within the apurinic/apyrimidinic (AP) site-terminated flap. Acts as a genome stabilization factor that prevents flaps from equilibrating into structures that lead to duplications and deletions. Also possesses 5'-3' exonuclease activity on nicked or gapped double-stranded DNA, and exhibits RNase H activity. Also involved in replication and repair of rDNA and in repairing mitochondrial DNA. The polypeptide is Flap endonuclease 1 (Phaeosphaeria nodorum (strain SN15 / ATCC MYA-4574 / FGSC 10173) (Glume blotch fungus)).